The chain runs to 3344 residues: Genome polyprotein (3344 aa).

The Peptidase S30 domain occupies 408-547; it reads IVGNSKINYI…RSVYAKMDQY (140 aa). Catalysis depends on for P1 proteinase activity residues histidine 456, aspartate 465, and serine 499. An Involved in interaction with stylet and aphid transmission motif is present at residues 598–601; it reads KITC. The Involved in virions binding and aphid transmission signature appears at 856–858; that stretch reads PTK. The 123-residue stretch at 882–1004 folds into the Peptidase C6 domain; it reads MYIAKKGYCY…DSEMKHYIVG (123 aa). Catalysis depends on for helper component proteinase activity residues cysteine 890 and histidine 963. The Helicase ATP-binding domain maps to 1473 to 1625; sequence EIAHSPEREF…TQFPTKIVTE (153 aa). 1486 to 1493 is a binding site for ATP; it reads GAVGSGKS. The DECH box signature appears at 1575 to 1578; sequence DECH. The Helicase C-terminal domain maps to 1644-1803; the sequence is DVTAFADNIL…GLPVMTHNVG (160 aa). A Nuclear localization signal motif is present at residues 2134 to 2141; sequence KKGNKKGK. Tyrosine 2156 is modified (O-(5'-phospho-RNA)-tyrosine). The region spanning 2283–2499 is the Peptidase C4 domain; the sequence is GKSLCQGMRN…LSWGALKVWE (217 aa). Active-site for nuclear inclusion protein A activity residues include histidine 2327, aspartate 2362, and cysteine 2431. In terms of domain architecture, RdRp catalytic spans 2761–2885; it reads WVYCDADGSQ…AIHPDHEHVL (125 aa). Residues 3059–3093 show a composition bias toward basic and acidic residues; that stretch reads KNEAVDAGLNEKLKEKEKQKEKEKEKQKEKEKDGA. Residues 3059–3116 are disordered; it reads KNEAVDAGLNEKLKEKEKQKEKEKEKQKEKEKDGASDGNDVSTSTKTGERDRDVNVGT.

This sequence belongs to the potyviridae genome polyprotein family. Interacts with host eIF4E protein (via cap-binding region); this interaction mediates the translation of the VPg-viral RNA conjugates. Part of a complex that comprises VPg, RNA, host EIF4E and EIF4G; this interaction mediates the translation of the VPg-viral RNA conjugates. VPg is uridylylated by the polymerase and is covalently attached to the 5'-end of the genomic RNA. This uridylylated form acts as a nucleotide-peptide primer for the polymerase. In terms of processing, potyviral RNA is expressed as two polyproteins which undergo post-translational proteolytic processing. Genome polyprotein is processed by NIa-pro, P1 and HC-pro proteinases resulting in the production of at least ten individual proteins. P3N-PIPO polyprotein is cleaved by P1 and HC-pro proteinases resulting in the production of three individual proteins. The P1 proteinase and the HC-pro cleave only their respective C-termini autocatalytically. 6K1 is essential for proper proteolytic separation of P3 from CI.

The protein resides in the host cytoplasmic vesicle. Its subcellular location is the host nucleus. The protein localises to the virion. It carries out the reaction RNA(n) + a ribonucleoside 5'-triphosphate = RNA(n+1) + diphosphate. The catalysed reaction is Hydrolyzes glutaminyl bonds, and activity is further restricted by preferences for the amino acids in P6 - P1' that vary with the species of potyvirus, e.g. Glu-Xaa-Xaa-Tyr-Xaa-Gln-|-(Ser or Gly) for the enzyme from tobacco etch virus. The natural substrate is the viral polyprotein, but other proteins and oligopeptides containing the appropriate consensus sequence are also cleaved.. The enzyme catalyses Hydrolyzes a Gly-|-Gly bond at its own C-terminus, commonly in the sequence -Tyr-Xaa-Val-Gly-|-Gly, in the processing of the potyviral polyprotein.. Functionally, required for aphid transmission and also has proteolytic activity. Only cleaves a Gly-Gly dipeptide at its own C-terminus. Interacts with virions and aphid stylets. Acts as a suppressor of RNA-mediated gene silencing, also known as post-transcriptional gene silencing (PTGS), a mechanism of plant viral defense that limits the accumulation of viral RNAs. May have RNA-binding activity. In terms of biological role, has helicase activity. It may be involved in replication. Indispensable for virus replication. Its function is as follows. Mediates the cap-independent, EIF4E-dependent translation of viral genomic RNAs. Binds to the cap-binding site of host EIF4E and thus interferes with the host EIF4E-dependent mRNA export and translation. VPg-RNA directly binds EIF4E and is a template for transcription. Also forms trimeric complexes with EIF4E-EIF4G, which are templates for translation. Functionally, has RNA-binding and proteolytic activities. In terms of biological role, an RNA-dependent RNA polymerase that plays an essential role in the virus replication. Involved in aphid transmission, cell-to-cell and systemis movement, encapsidation of the viral RNA and in the regulation of viral RNA amplification. The chain is Genome polyprotein from Carica papaya (Papaya).